The chain runs to 266 residues: N-acetyltransferase ECO1 (266 aa).

A CCHH-type zinc finger spans residues 31–55 (KKCTECQMSYIIDSPADCAEHKKYH). An N-acetyltransferase domain is found at 108–266 (TPGKTAEVKA…SGELLIPCYI (159 aa)).

It belongs to the acetyltransferase family. ECO subfamily.

The protein resides in the nucleus. Functionally, probable acetyltransferase required for the establishment of sister chromatid cohesion and couple the processes of cohesion and DNA replication to ensure that only sister chromatids become paired together. In contrast to the structural cohesins, the deposition and establishment factors are required only during S phase. Acts by acetylating the cohesin complex component SMC3. This is N-acetyltransferase ECO1 (ECO1) from Eremothecium gossypii (strain ATCC 10895 / CBS 109.51 / FGSC 9923 / NRRL Y-1056) (Yeast).